The primary structure comprises 582 residues: MITRMSELFLRTLRDDPADAEVASHKLLIRAGYIRPVAPGLYSWLPLGLRVLRNIERVIRDEMNAIGGQEILFPALLPRAPYETTNRWTQYGDSVFRLKDRRGNDYLLGPTHEELFTLTVKGEYSSYKDFPLTLYQIQTKYRDEARPRAGILRAREFVMKDSYSFDIDAAGLKAAYRAHREAYQRIFDRLQVRYVIVSAVSGAMGGSASEEFLAESPSGEDAFVRCLESGYTANVEAVVTARPDTLPIDGLPEAVVHDTGDTPTIASLVAWANEADLGRTVTAADTLKNVLIKVRQPGGDTELLAIGVPGDREVDDKRLGAALEPADYALLDDDDFAKHPFLVKGYIGPKALRENNVRYLVDPRIVDGTSWITGADQPGRHVVGLVAGRDFTADGTIEAAEVREGDPSPDGAGPLVMARGIEIGHIFQLGSKYTDAFTADVLGEDGKPVRLTMGSYGIGVSRLVAVVAEQHHDELGLRWPSTVAPFDVHLVIANKDAQARAGATALAADLDRLGVEVLLDDRQASPGVKFKDAELLGMPWIVVVGRGWADGVVELRDRFSGQTRELVAGASLATDIAAAVTG.

Belongs to the class-II aminoacyl-tRNA synthetase family. ProS type 1 subfamily. Homodimer.

Its subcellular location is the cytoplasm. It catalyses the reaction tRNA(Pro) + L-proline + ATP = L-prolyl-tRNA(Pro) + AMP + diphosphate. Catalyzes the attachment of proline to tRNA(Pro) in a two-step reaction: proline is first activated by ATP to form Pro-AMP and then transferred to the acceptor end of tRNA(Pro). As ProRS can inadvertently accommodate and process non-cognate amino acids such as alanine and cysteine, to avoid such errors it has two additional distinct editing activities against alanine. One activity is designated as 'pretransfer' editing and involves the tRNA(Pro)-independent hydrolysis of activated Ala-AMP. The other activity is designated 'posttransfer' editing and involves deacylation of mischarged Ala-tRNA(Pro). The misacylated Cys-tRNA(Pro) is not edited by ProRS. The polypeptide is Proline--tRNA ligase (Mycobacterium bovis (strain ATCC BAA-935 / AF2122/97)).